We begin with the raw amino-acid sequence, 102 residues long: Small ribosomal subunit protein uS10 (102 aa).

This sequence belongs to the universal ribosomal protein uS10 family. As to quaternary structure, part of the 30S ribosomal subunit.

Involved in the binding of tRNA to the ribosomes. The chain is Small ribosomal subunit protein uS10 from Staphylococcus haemolyticus (strain JCSC1435).